The following is a 397-amino-acid chain: 1-deoxy-D-xylulose 5-phosphate reductoisomerase (397 aa).

Positions 10, 11, 12, 13, 36, 37, and 124 each coordinate NADPH. K125 contacts 1-deoxy-D-xylulose 5-phosphate. E126 provides a ligand contact to NADPH. D150 serves as a coordination point for Mn(2+). S151, E152, S186, and H209 together coordinate 1-deoxy-D-xylulose 5-phosphate. E152 lines the Mn(2+) pocket. G215 is an NADPH binding site. Residues S222, N227, K228, and E231 each coordinate 1-deoxy-D-xylulose 5-phosphate. E231 lines the Mn(2+) pocket.

Belongs to the DXR family. Mg(2+) is required as a cofactor. Mn(2+) serves as cofactor.

The enzyme catalyses 2-C-methyl-D-erythritol 4-phosphate + NADP(+) = 1-deoxy-D-xylulose 5-phosphate + NADPH + H(+). Its pathway is isoprenoid biosynthesis; isopentenyl diphosphate biosynthesis via DXP pathway; isopentenyl diphosphate from 1-deoxy-D-xylulose 5-phosphate: step 1/6. In terms of biological role, catalyzes the NADPH-dependent rearrangement and reduction of 1-deoxy-D-xylulose-5-phosphate (DXP) to 2-C-methyl-D-erythritol 4-phosphate (MEP). This chain is 1-deoxy-D-xylulose 5-phosphate reductoisomerase, found in Aeromonas salmonicida (strain A449).